The sequence spans 253 residues: 5-oxoprolinase subunit A (253 aa).

The protein belongs to the LamB/PxpA family. As to quaternary structure, forms a complex composed of PxpA, PxpB and PxpC.

The catalysed reaction is 5-oxo-L-proline + ATP + 2 H2O = L-glutamate + ADP + phosphate + H(+). Catalyzes the cleavage of 5-oxoproline to form L-glutamate coupled to the hydrolysis of ATP to ADP and inorganic phosphate. In Bacillus thuringiensis subsp. konkukian (strain 97-27), this protein is 5-oxoprolinase subunit A.